Here is a 126-residue protein sequence, read N- to C-terminus: Prefoldin subunit beta (126 aa).

The protein belongs to the prefoldin subunit beta family. Heterohexamer of two alpha and four beta subunits.

Its subcellular location is the cytoplasm. Its function is as follows. Molecular chaperone capable of stabilizing a range of proteins. Seems to fulfill an ATP-independent, HSP70-like function in archaeal de novo protein folding. The protein is Prefoldin subunit beta (pfdB) of Pyrobaculum aerophilum (strain ATCC 51768 / DSM 7523 / JCM 9630 / CIP 104966 / NBRC 100827 / IM2).